The sequence spans 225 residues: UPF0758 protein BAMEG_4721 (225 aa).

The MPN domain maps to 103–225; sequence SIRSPEDCAT…FVSLKEKGHI (123 aa). Residues His174, His176, and Asp187 each contribute to the Zn(2+) site. A JAMM motif motif is present at residues 174–187; the sequence is HNHPSGDPAPSRED.

It belongs to the UPF0758 family.

The protein is UPF0758 protein BAMEG_4721 of Bacillus anthracis (strain CDC 684 / NRRL 3495).